The chain runs to 131 residues: SKSSTETPPSYNQLNYNENLLRFFNSKPVTAPVELDPPKLESSYVSSAREDARSTLSPVHGFEGSGGSGSSGNFTTGSNVRMSSVTNTSNAGTGTSGGGNSAGGASGGVGAVGVAANAPLVTVTLTESLLN.

The disordered stretch occupies residues 29–109 (VTAPVELDPP…NSAGGASGGV (81 aa)). Low complexity predominate over residues 71-93 (SGNFTTGSNVRMSSVTNTSNAGT). Residues 94-109 (GTSGGGNSAGGASGGV) show a composition bias toward gly residues.

Forms a heterodimer with timeless (TIM); the complex then translocates into the nucleus. In terms of processing, phosphorylated with a circadian rhythmicity, probably by the double-time protein (dbt). Phosphorylation could be implicated in the stability of per monomer and in the formation of heterodimer per-tim.

Its subcellular location is the nucleus. It localises to the cytoplasm. The protein localises to the perinuclear region. Essential for biological clock functions. Determines the period length of circadian and ultradian rhythms; an increase in PER dosage leads to shortened circadian rhythms and a decrease leads to lengthened circadian rhythms. Essential for the circadian rhythmicity of locomotor activity, eclosion behavior, and for the rhythmic component of the male courtship song that originates in the thoracic nervous system. The biological cycle depends on the rhythmic formation and nuclear localization of the TIM-PER complex. Light induces the degradation of TIM, which promotes elimination of PER. Nuclear activity of the heterodimer coordinatively regulates PER and TIM transcription through a negative feedback loop. Behaves as a negative element in circadian transcriptional loop. Does not appear to bind DNA, suggesting indirect transcriptional inhibition. In Zaprionus tuberculatus (Vinegar fly), this protein is Period circadian protein (per).